We begin with the raw amino-acid sequence, 314 residues long: Olfactory receptor 9I1 (314 aa).

Over 1–25 (MAKNNLTRVTEFILMGFMDHPKLEI) the chain is Extracellular. Residue Asn-5 is glycosylated (N-linked (GlcNAc...) asparagine). A helical membrane pass occupies residues 26–46 (PLFLVFLSFYLVTLLGNVGMI). The Cytoplasmic portion of the chain corresponds to 47 to 54 (MLIQVDVK). Residues 55-75 (LYTPMYFFLSHLSLLDACYTS) traverse the membrane as a helical segment. The Extracellular portion of the chain corresponds to 76–99 (VITPQILATLATGKTVISYGHCAA). Cys-97 and Cys-189 are oxidised to a cystine. The helical transmembrane segment at 100 to 120 (QFFLFTICAGTECFLLAVMAY) threads the bilayer. Topologically, residues 121-139 (DRYAAIRNPLLYTVAMNPR) are cytoplasmic. A helical transmembrane segment spans residues 140–160 (LCWSLVVGAYVCGVSGAILRT). Residues 161–197 (TCTFTLSFCKDNQINFFFCDLPPLLKLACSDTANIEI) are Extracellular-facing. A helical membrane pass occupies residues 198 to 217 (VIIFFGNFVILANASVILIS). Residues 218-237 (YLLIIKTILKVKSSGGRAKT) lie on the Cytoplasmic side of the membrane. The chain crosses the membrane as a helical span at residues 238-258 (FSTCASHITAVALFFGALIFM). The Extracellular segment spans residues 259-271 (YLQSGSGKSLEED). The chain crosses the membrane as a helical span at residues 272–292 (KVVSVFYTVVIPMLNPLIYSL). At 293–314 (RNKDVKDAFRKVARRLQVSLSM) the chain is on the cytoplasmic side.

Belongs to the G-protein coupled receptor 1 family.

The protein localises to the cell membrane. Odorant receptor. The chain is Olfactory receptor 9I1 (OR9I1) from Homo sapiens (Human).